The chain runs to 227 residues: MFCCCKDCRGNQRVSNFDSLTGVFFGDLEFGPQNQRYIKMNEEEDKDQDRVTRGCSHTHSCNPPGPEDASHSHTCFHAHTHLIISDQQENDHSDSSNKKRLCGNREAVRKYREKKKARTAYLEDEVMRLQSLNEQFLRKLQSQEMVETELIRLRALLVEMQGKIEVELCSFSFQKQCNGSGFVFKEDGCNLATSNMMCEAARVECEEGQTLHDPIQSFVPQPPPFSR.

A disordered region spans residues 44 to 68 (EDKDQDRVTRGCSHTHSCNPPGPED). The bZIP domain occupies 94–160 (DSSNKKRLCG…IRLRALLVEM (67 aa)). The tract at residues 98-118 (KKRLCGNREAVRKYREKKKAR) is basic motif. The segment at 122–129 (LEDEVMRL) is leucine-zipper.

As to quaternary structure, homodimer. As to expression, expressed in young leaves and cauline leaves.

It localises to the nucleus. The protein localises to the cytoplasm. Transcription factor involved in the regulation of salt stress response. Functions as a negative transcriptional regulator of salt stress acclimation response by regulating cation homeostasis. Negatively regulates the expression of genes contributing to ion and osmotic homeostasis during salt stress, such as the Na(+) transporter HKT1, the Na(+)/H(+) antiporter SOS1, the aquaporin PIP2-1 and the glutamine synthetase GLN1-3. In addition, targets genes with functions in plant growth and development, such as argonaute 4 (AGO4) and cyclophilin 19 (CYP19). The sequence is that of Basic leucine zipper 24 from Arabidopsis thaliana (Mouse-ear cress).